We begin with the raw amino-acid sequence, 80 residues long: Saposin-B-Val (80 aa).

The Saposin B-type domain occupies 1–80; that stretch reads GDVCQDCIQM…CGLVGFCEEV (80 aa). Disulfide bonds link Cys4–Cys77, Cys7–Cys71, and Cys36–Cys47. Residue Asn21 is glycosylated (N-linked (GlcNAc...) (complex) asparagine).

Saposin-B is a homodimer. Interacts with GRN; facilitates lysosomal delivery of progranulin from the extracellular space and the biosynthetic pathway. The one residue extended Saposin-B-Val is only found in a minority of the chains.

Functionally, saposin-B stimulates the hydrolysis of galacto-cerebroside sulfate by arylsulfatase A (EC 3.1.6.8), GM1 gangliosides by beta-galactosidase (EC 3.2.1.23) and globotriaosylceramide by alpha-galactosidase A (EC 3.2.1.22). Saposin-B forms a solubilizing complex with the substrates of the sphingolipid hydrolases. The chain is Saposin-B-Val (PSAP) from Sus scrofa (Pig).